The chain runs to 85 residues: UPF0297 protein Clos_1665 (85 aa).

Belongs to the UPF0297 family.

The chain is UPF0297 protein Clos_1665 from Alkaliphilus oremlandii (strain OhILAs) (Clostridium oremlandii (strain OhILAs)).